The chain runs to 557 residues: Dihydroxy-acid dehydratase (557 aa).

Residue C50 coordinates [2Fe-2S] cluster. Residue D82 coordinates Mg(2+). C123 lines the [2Fe-2S] cluster pocket. Mg(2+) contacts are provided by D124 and K125. An N6-carboxylysine modification is found at K125. Residue C195 coordinates [2Fe-2S] cluster. E447 provides a ligand contact to Mg(2+). The active-site Proton acceptor is S473.

The protein belongs to the IlvD/Edd family. Homodimer. It depends on [2Fe-2S] cluster as a cofactor. Mg(2+) serves as cofactor.

It carries out the reaction (2R)-2,3-dihydroxy-3-methylbutanoate = 3-methyl-2-oxobutanoate + H2O. The enzyme catalyses (2R,3R)-2,3-dihydroxy-3-methylpentanoate = (S)-3-methyl-2-oxopentanoate + H2O. Its pathway is amino-acid biosynthesis; L-isoleucine biosynthesis; L-isoleucine from 2-oxobutanoate: step 3/4. It functions in the pathway amino-acid biosynthesis; L-valine biosynthesis; L-valine from pyruvate: step 3/4. Functionally, functions in the biosynthesis of branched-chain amino acids. Catalyzes the dehydration of (2R,3R)-2,3-dihydroxy-3-methylpentanoate (2,3-dihydroxy-3-methylvalerate) into 2-oxo-3-methylpentanoate (2-oxo-3-methylvalerate) and of (2R)-2,3-dihydroxy-3-methylbutanoate (2,3-dihydroxyisovalerate) into 2-oxo-3-methylbutanoate (2-oxoisovalerate), the penultimate precursor to L-isoleucine and L-valine, respectively. The protein is Dihydroxy-acid dehydratase of Metallosphaera sedula (strain ATCC 51363 / DSM 5348 / JCM 9185 / NBRC 15509 / TH2).